The sequence spans 102 residues: Small ribosomal subunit protein uS10 (102 aa).

This sequence belongs to the universal ribosomal protein uS10 family. In terms of assembly, part of the 30S ribosomal subunit.

Its function is as follows. Involved in the binding of tRNA to the ribosomes. The sequence is that of Small ribosomal subunit protein uS10 from Chloroflexus aurantiacus (strain ATCC 29366 / DSM 635 / J-10-fl).